A 229-amino-acid polypeptide reads, in one-letter code: Ribonuclease 3 (229 aa).

One can recognise an RNase III domain in the interval leucine 8 to aspartate 130. Glutamate 43 serves as a coordination point for Mg(2+). Aspartate 47 is an active-site residue. Residues aspartate 116 and glutamate 119 each coordinate Mg(2+). Glutamate 119 is an active-site residue. A DRBM domain is found at aspartate 157 to glutamate 227. The segment at serine 201 to alanine 229 is disordered.

It belongs to the ribonuclease III family. Homodimer. Mg(2+) serves as cofactor.

The protein localises to the cytoplasm. The catalysed reaction is Endonucleolytic cleavage to 5'-phosphomonoester.. Functionally, digests double-stranded RNA. Involved in the processing of primary rRNA transcript to yield the immediate precursors to the large and small rRNAs (23S and 16S). Processes some mRNAs, and tRNAs when they are encoded in the rRNA operon. Processes pre-crRNA and tracrRNA of type II CRISPR loci if present in the organism. This chain is Ribonuclease 3, found in Idiomarina loihiensis (strain ATCC BAA-735 / DSM 15497 / L2-TR).